The following is a 364-amino-acid chain: Aminomethyltransferase (364 aa).

The protein belongs to the GcvT family. As to quaternary structure, the glycine cleavage system is composed of four proteins: P, T, L and H.

It catalyses the reaction N(6)-[(R)-S(8)-aminomethyldihydrolipoyl]-L-lysyl-[protein] + (6S)-5,6,7,8-tetrahydrofolate = N(6)-[(R)-dihydrolipoyl]-L-lysyl-[protein] + (6R)-5,10-methylene-5,6,7,8-tetrahydrofolate + NH4(+). Its function is as follows. The glycine cleavage system catalyzes the degradation of glycine. This is Aminomethyltransferase from Proteus mirabilis (strain HI4320).